Here is a 514-residue protein sequence, read N- to C-terminus: CBL-interacting protein kinase 25 (514 aa).

In terms of domain architecture, Protein kinase spans 21-281 (YEFGPLVGEG…IPEIMEMRWF (261 aa)). ATP contacts are provided by residues 27–35 (VGEGNFAKV) and Lys50. Asp149 (proton acceptor) is an active-site residue. The segment at 167 to 196 (DFGLSALADMERREAHLQTVCGTPLFLAPE) is activation loop. The segment at 303–340 (GLDGEPELYDSDTDTIESSSSSESPTPVAGTPRGMHTS) is disordered. The segment covering 304–317 (LDGEPELYDSDTDT) has biased composition (acidic residues). The segment covering 318–329 (IESSSSSESPTP) has biased composition (low complexity). The region spanning 323-395 (SSESPTPVAG…PSFDLSGLFE (73 aa)) is the NAF domain. The interval 398 to 427 (GERMRFVSGAPVADIIAKLQEIAGMVSFTA) is PPI.

This sequence belongs to the protein kinase superfamily. CAMK Ser/Thr protein kinase family. SNF1 subfamily. Mn(2+) serves as cofactor.

The catalysed reaction is L-seryl-[protein] + ATP = O-phospho-L-seryl-[protein] + ADP + H(+). The enzyme catalyses L-threonyl-[protein] + ATP = O-phospho-L-threonyl-[protein] + ADP + H(+). CIPK serine-threonine protein kinases interact with CBL proteins. Binding of a CBL protein to the regulatory NAF domain of CIPK protein lead to the activation of the kinase in a calcium-dependent manner. This Oryza sativa subsp. japonica (Rice) protein is CBL-interacting protein kinase 25 (CIPK25).